Consider the following 409-residue polypeptide: Tetracenomycin polyketide synthase ketoacyl synthase beta subunit (409 aa).

The Ketosynthase family 3 (KS3) domain occupies 4 to 407 (PAPVVVTGLG…GFNSALVVRR (404 aa)).

The protein belongs to the thiolase-like superfamily. Beta-ketoacyl-ACP synthases family. As to quaternary structure, the tetracenomycin polyketide synthase (TCM PKS) is composed of a ketosynthase complex (TcmKL), an acyl carrier protein (TcmM), a cyclase (TcmN) and a probable second cyclase (TcmJ). TcmK and TcmL form a heterodimeric complex.

It carries out the reaction 10 malonyl-CoA + 8 H(+) = tetracenomycin F2 + 10 CO2 + 10 CoA + 2 H2O. Its pathway is antibiotic biosynthesis; tetracenomycin C biosynthesis. In terms of biological role, involved in the biosynthesis of tetracenomycin C (TCM C). Part of a type II polyketide synthase (PKS) that catalyzes the synthesis of tetracenomycin F2 (TCM F2), a precursor of TCM C, from malonyl-CoA. TcmK and TcmL form a heterodimeric alpha-beta complex that catalyzes the condensation reactions between the growing acyl-enzyme chain and the malonyl-CoA extender units. This is Tetracenomycin polyketide synthase ketoacyl synthase beta subunit from Streptomyces glaucescens.